The following is a 479-amino-acid chain: uncharacterized protein (479 aa).

8 consecutive transmembrane segments (helical) span residues 25-45 (VVFV…LFFF), 63-83 (IAMI…LAGG), 110-130 (LFGP…TVIF), 133-153 (GVFN…AGIL), 175-195 (VLSI…VLGI), 229-249 (ILLY…IVWL), 287-307 (LILN…IAFI), and 328-348 (LFAP…LLLL).

The protein in the C-terminal section; belongs to the GatC family.

The protein resides in the cell membrane. This is an uncharacterized protein from Mycoplasma pneumoniae (strain ATCC 29342 / M129 / Subtype 1) (Mycoplasmoides pneumoniae).